We begin with the raw amino-acid sequence, 813 residues long: UPF0508 protein KLLA0A06237g (813 aa).

A disordered region spans residues 478–537 (KKDKSKSQKNSTDSLAKLSDTKSIHPPESAMSSHASTPSSTSKSSKSSKSSSTLSPSTCK). A compositionally biased stretch (low complexity) spans 506 to 537 (SAMSSHASTPSSTSKSSKSSKSSSTLSPSTCK).

The protein belongs to the UPF0508 family.

This chain is UPF0508 protein KLLA0A06237g, found in Kluyveromyces lactis (strain ATCC 8585 / CBS 2359 / DSM 70799 / NBRC 1267 / NRRL Y-1140 / WM37) (Yeast).